The chain runs to 350 residues: Bifunctional nitrilase/nitrile hydratase NIT4B (350 aa).

The CN hydrolase domain maps to 30–302; the sequence is VRATVVQAST…EALISADLDL (273 aa). E70 acts as the Proton acceptor in catalysis. K157 is an active-site residue. Catalysis depends on C191, which acts as the Nucleophile.

The protein belongs to the carbon-nitrogen hydrolase superfamily. Nitrilase family. Highly expressed in leaves and cotyledons, lower expression in stems and roots.

The catalysed reaction is L-asparagine = 3-cyano-L-alanine + H2O. It catalyses the reaction 3-cyano-L-alanine + 2 H2O = L-aspartate + NH4(+). In terms of biological role, involved in the cyanide detoxification pathway. Has nitrilase and nitrile-hydratase activity in the ratio 3.3:1, producing both asparagine and aspartic acid from beta-cyano-L-alanine (Ala(CN)). Can also use 3-phenylpropionitrile as substrate, but not indole-3-acetonitrile. The protein is Bifunctional nitrilase/nitrile hydratase NIT4B (NIT4B) of Lupinus angustifolius (Narrow-leaved blue lupine).